We begin with the raw amino-acid sequence, 476 residues long: Bifunctional protein HldE (476 aa).

Positions 1–318 are ribokinase; it reads MLSKKPNILV…EYESSLHKSN (318 aa). 195–198 is a binding site for ATP; it reads NKKE. Asp263 is a catalytic residue. A cytidylyltransferase region spans residues 345-476; sequence FTNGCFDILH…RIQENEKCNN (132 aa).

In the N-terminal section; belongs to the carbohydrate kinase PfkB family. The protein in the C-terminal section; belongs to the cytidylyltransferase family. As to quaternary structure, homodimer.

It carries out the reaction D-glycero-beta-D-manno-heptose 7-phosphate + ATP = D-glycero-beta-D-manno-heptose 1,7-bisphosphate + ADP + H(+). The catalysed reaction is D-glycero-beta-D-manno-heptose 1-phosphate + ATP + H(+) = ADP-D-glycero-beta-D-manno-heptose + diphosphate. It participates in nucleotide-sugar biosynthesis; ADP-L-glycero-beta-D-manno-heptose biosynthesis; ADP-L-glycero-beta-D-manno-heptose from D-glycero-beta-D-manno-heptose 7-phosphate: step 1/4. Its pathway is nucleotide-sugar biosynthesis; ADP-L-glycero-beta-D-manno-heptose biosynthesis; ADP-L-glycero-beta-D-manno-heptose from D-glycero-beta-D-manno-heptose 7-phosphate: step 3/4. In terms of biological role, catalyzes the phosphorylation of D-glycero-D-manno-heptose 7-phosphate at the C-1 position to selectively form D-glycero-beta-D-manno-heptose-1,7-bisphosphate. Its function is as follows. Catalyzes the ADP transfer from ATP to D-glycero-beta-D-manno-heptose 1-phosphate, yielding ADP-D-glycero-beta-D-manno-heptose. The chain is Bifunctional protein HldE from Aliarcobacter butzleri (strain RM4018) (Arcobacter butzleri).